A 957-amino-acid polypeptide reads, in one-letter code: Glycine dehydrogenase (decarboxylating) 2 (957 aa).

Lys-707 is subject to N6-(pyridoxal phosphate)lysine.

This sequence belongs to the GcvP family. As to quaternary structure, the glycine cleavage system is composed of four proteins: P, T, L and H. Pyridoxal 5'-phosphate serves as cofactor.

It carries out the reaction N(6)-[(R)-lipoyl]-L-lysyl-[glycine-cleavage complex H protein] + glycine + H(+) = N(6)-[(R)-S(8)-aminomethyldihydrolipoyl]-L-lysyl-[glycine-cleavage complex H protein] + CO2. The glycine cleavage system catalyzes the degradation of glycine. The P protein binds the alpha-amino group of glycine through its pyridoxal phosphate cofactor; CO(2) is released and the remaining methylamine moiety is then transferred to the lipoamide cofactor of the H protein. In Pseudomonas fluorescens (strain ATCC BAA-477 / NRRL B-23932 / Pf-5), this protein is Glycine dehydrogenase (decarboxylating) 2.